A 680-amino-acid chain; its full sequence is Glutamine-dependent NAD(+) synthetase (680 aa).

Residues 12–276 (VRVAACTHHA…EHRSVADVDT (265 aa)) enclose the CN hydrolase domain. Glu52 functions as the Proton acceptor; for glutaminase activity in the catalytic mechanism. The active-site For glutaminase activity is Lys121. Tyr127 provides a ligand contact to L-glutamine. Cys176 functions as the Nucleophile; for glutaminase activity in the catalytic mechanism. L-glutamine contacts are provided by Ser203 and Arg209. 366 to 373 (GVSGGLDS) contributes to the ATP binding site. Asn456 is a deamido-NAD(+) binding site. Thr480 contacts ATP. Deamido-NAD(+) is bound by residues Glu485, 490–493 (WSTY), and Lys636.

This sequence in the C-terminal section; belongs to the NAD synthetase family.

It carries out the reaction deamido-NAD(+) + L-glutamine + ATP + H2O = L-glutamate + AMP + diphosphate + NAD(+) + H(+). The protein operates within cofactor biosynthesis; NAD(+) biosynthesis; NAD(+) from deamido-NAD(+) (L-Gln route): step 1/1. Functionally, catalyzes the ATP-dependent amidation of deamido-NAD to form NAD. Uses L-glutamine as a nitrogen source. This chain is Glutamine-dependent NAD(+) synthetase, found in Mycobacterium leprae (strain TN).